The chain runs to 648 residues: Bifunctional protein TilS/HprT (648 aa).

29-34 is an ATP binding site; sequence SGGPDS. Asp-627 is a binding site for Mg(2+).

This sequence in the N-terminal section; belongs to the tRNA(Ile)-lysidine synthase family. It in the C-terminal section; belongs to the purine/pyrimidine phosphoribosyltransferase family. It depends on Mg(2+) as a cofactor.

Its subcellular location is the cytoplasm. It carries out the reaction IMP + diphosphate = hypoxanthine + 5-phospho-alpha-D-ribose 1-diphosphate. The catalysed reaction is GMP + diphosphate = guanine + 5-phospho-alpha-D-ribose 1-diphosphate. It catalyses the reaction cytidine(34) in tRNA(Ile2) + L-lysine + ATP = lysidine(34) in tRNA(Ile2) + AMP + diphosphate + H(+). Ligates lysine onto the cytidine present at position 34 of the AUA codon-specific tRNA(Ile) that contains the anticodon CAU, in an ATP-dependent manner. Cytidine is converted to lysidine, thus changing the amino acid specificity of the tRNA from methionine to isoleucine. The sequence is that of Bifunctional protein TilS/HprT (tilS/hprT) from Listeria monocytogenes serotype 4b (strain F2365).